The following is a 306-amino-acid chain: Ornithine carbamoyltransferase (306 aa).

Residues 54 to 57 (STRT), Q81, R105, and 132 to 135 (HPLQ) contribute to the carbamoyl phosphate site. L-ornithine contacts are provided by residues N162, D226, and 230–231 (SM). Carbamoyl phosphate-binding positions include 266–267 (CL) and R294.

Belongs to the aspartate/ornithine carbamoyltransferase superfamily. OTCase family.

It localises to the cytoplasm. It catalyses the reaction carbamoyl phosphate + L-ornithine = L-citrulline + phosphate + H(+). It functions in the pathway amino-acid biosynthesis; L-arginine biosynthesis; L-arginine from L-ornithine and carbamoyl phosphate: step 1/3. In terms of biological role, reversibly catalyzes the transfer of the carbamoyl group from carbamoyl phosphate (CP) to the N(epsilon) atom of ornithine (ORN) to produce L-citrulline. This Sulfurisphaera tokodaii (strain DSM 16993 / JCM 10545 / NBRC 100140 / 7) (Sulfolobus tokodaii) protein is Ornithine carbamoyltransferase.